A 521-amino-acid polypeptide reads, in one-letter code: Vang-like protein 2 (521 aa).

A disordered region spans residues 1–81; that stretch reads MDTESQYSGY…TTVVTGTSEH (81 aa). Topologically, residues 1–108 are cytoplasmic; the sequence is MDTESQYSGY…VPLDCSRHLG (108 aa). Over residues 15–33 the composition is skewed to basic residues; sequence GHSRSSRKHRDRRDRHRSK. The segment covering 57 to 67 has biased composition (basic and acidic residues); sequence ESTRGDERDDN. Over residues 69–81 the composition is skewed to low complexity; sequence GETTTVVTGTSEH. A helical membrane pass occupies residues 109-129; that stretch reads VAAGATLALLSFLTPLAFLLL. The Extracellular segment spans residues 130–147; it reads PPLLWREELEPCGTACEG. Residues 148–168 form a helical membrane-spanning segment; the sequence is LFISVAFKLLILLLGSWALFF. Residues 169–178 lie on the Cytoplasmic side of the membrane; the sequence is RRPKASLPRV. The chain crosses the membrane as a helical span at residues 179–199; sequence FVLRALLMVLVFLLVVSYWLF. The Extracellular segment spans residues 200-217; that stretch reads YGVRILDARERSYQGVVQ. Residues 218 to 238 traverse the membrane as a helical segment; it reads FAVSLVDALLFVHYLAVVLLE. Residues 239 to 521 lie on the Cytoplasmic side of the membrane; the sequence is LRQLQPQFTL…VMRLQSETSV (283 aa).

This sequence belongs to the Vang family. As to quaternary structure, homodimer and heterodimer with VANGL1. Interacts through its C-terminal region with the N-terminal half of DVL1, DVL2 and DVL3. The PDZ domain of DVL1, DVL2 and DVL3 is required for the interaction. Also interacts with the PDZ domains of MAGI3, SCRIB/SCRB1 and FZD3. Interacts with PRICKLE3.

The protein resides in the cell membrane. Functionally, involved in the control of early morphogenesis and patterning of both axial midline structures and the development of neural plate. Plays a role in the regulation of planar cell polarity, particularly in the orientation of stereociliary bundles in the cochlea. Required for polarization and movement of myocardializing cells in the outflow tract and seems to act via RHOA signaling to regulate this process. Required for cell surface localization of FZD3 and FZD6 in the inner ear. This chain is Vang-like protein 2 (VANGL2), found in Homo sapiens (Human).